Consider the following 299-residue polypeptide: HTH-type transcriptional regulator ArgP (299 aa).

In terms of domain architecture, HTH lysR-type spans 2–58 (FDYKLLSALAAVIEQAGFERAAQVLGLSQSAISQRIKLLEARVGQPVLVRVTPPAPT). The segment at residues 19–38 (FERAAQVLGLSQSAISQRIK) is a DNA-binding region (H-T-H motif).

This sequence belongs to the LysR transcriptional regulatory family. As to quaternary structure, homodimer.

Controls the transcription of genes involved in arginine and lysine metabolism. The chain is HTH-type transcriptional regulator ArgP from Pseudomonas fluorescens (strain ATCC BAA-477 / NRRL B-23932 / Pf-5).